The sequence spans 154 residues: MVRAVAVLRGDSKVSGVVTFEQVDQNSQVSVIVDLVGNDANAKRGFHIHQFGDNTNGCTSAGPHFNPEGKTHGDRTAAVRHVGDLGNLESDAQGNIKTTFSDSVISLFGANSIIGRTIVIHAGEDDLGKGTSEESLKTGNAGARNACGVIGIAV.

3 residues coordinate Cu cation: His-47, His-49, and His-64. The cysteines at positions 58 and 147 are disulfide-linked. Positions 64, 72, 81, and 84 each coordinate Zn(2+). His-121 is a binding site for Cu cation. Arg-144 serves as a coordination point for substrate.

It belongs to the Cu-Zn superoxide dismutase family. Homodimer. The cofactor is Cu cation. Zn(2+) serves as cofactor.

The protein resides in the cytoplasm. It catalyses the reaction 2 superoxide + 2 H(+) = H2O2 + O2. Its function is as follows. Destroys radicals which are normally produced within the cells and which are toxic to biological systems. The protein is Superoxide dismutase [Cu-Zn] (sod1) of Schizosaccharomyces pombe (strain 972 / ATCC 24843) (Fission yeast).